Reading from the N-terminus, the 140-residue chain is Beta/delta-urticatoxin-De2a (140 aa).

Residues 1–18 (MKTSTALVLLLALTATSA) form the signal peptide. A propeptide spanning residues 19–78 (SSGDHQFIDEQNIMNVAEGKNVISSLSSSGGGDDAAAIMESVLVNGGNRKMVFMMVSGSQ) is cleaved from the precursor. Intrachain disulfides connect C81–C95, C88–C100, C94–C108, C113–C127, C120–C131, and C126–C139.

The protein belongs to the urticatoxin-2 family. In terms of tissue distribution, expressed in trichomes, that are stiff epidermal hairs located on the surface of petioles and leaves.

The protein resides in the secreted. Functionally, plant defense neurotoxin that causes pain and systemic symptoms in mammals via modulation of voltage-gated sodium channels (Nav). Potent modulator of human Nav1.5/SCN5A (EC(50)=55 nM), Nav1.6/SCN8A (EC(50)=0.86 nM), and Nav1.7/SCN9A (EC(50)=208 nM), where it shifts the activation threshold to more negative potentials and delays fast inactivation. Also shifts the voltage-dependence of steady-state fast inactivation of Nav1.6/SCN8A, but not that of Nav1.5/SCN5A or Nav1.7/SCN9A. On Nav1.7/SCN9A, principally acts by binding to extracellular loops of domain IV (Nav site 3). In vivo, intraplantar injection into mice causes numerous dose-dependent, immediate, and long-lasting spontaneous pain behaviors, while no swelling is observed in the injected paw. At the highest doses tested, systemic symptoms including hypokinesia and hypersalivation are observed. The polypeptide is Beta/delta-urticatoxin-De2a (Dendrocnide excelsa (Giant stinging tree)).